Consider the following 273-residue polypeptide: Type III pantothenate kinase (273 aa).

5–12 (DVGNSHVV) contributes to the ATP binding site. 112 to 115 (GTDL) contacts substrate. D114 functions as the Proton acceptor in the catalytic mechanism. Position 134 (D134) interacts with K(+). Residue T137 coordinates ATP. T189 is a binding site for substrate.

Belongs to the type III pantothenate kinase family. As to quaternary structure, homodimer. NH4(+) is required as a cofactor. K(+) serves as cofactor.

Its subcellular location is the cytoplasm. The catalysed reaction is (R)-pantothenate + ATP = (R)-4'-phosphopantothenate + ADP + H(+). It functions in the pathway cofactor biosynthesis; coenzyme A biosynthesis; CoA from (R)-pantothenate: step 1/5. Its function is as follows. Catalyzes the phosphorylation of pantothenate (Pan), the first step in CoA biosynthesis. The protein is Type III pantothenate kinase of Treponema pallidum subsp. pallidum (strain SS14).